The chain runs to 212 residues: Phosphatidylserine decarboxylase proenzyme (212 aa).

Residue S182 is the Schiff-base intermediate with substrate; via pyruvic acid of the active site. S182 carries the post-translational modification Pyruvic acid (Ser); by autocatalysis.

It belongs to the phosphatidylserine decarboxylase family. PSD-A subfamily. As to quaternary structure, heterodimer of a large membrane-associated beta subunit and a small pyruvoyl-containing alpha subunit. Pyruvate serves as cofactor. Is synthesized initially as an inactive proenzyme. Formation of the active enzyme involves a self-maturation process in which the active site pyruvoyl group is generated from an internal serine residue via an autocatalytic post-translational modification. Two non-identical subunits are generated from the proenzyme in this reaction, and the pyruvate is formed at the N-terminus of the alpha chain, which is derived from the carboxyl end of the proenzyme. The post-translation cleavage follows an unusual pathway, termed non-hydrolytic serinolysis, in which the side chain hydroxyl group of the serine supplies its oxygen atom to form the C-terminus of the beta chain, while the remainder of the serine residue undergoes an oxidative deamination to produce ammonia and the pyruvoyl prosthetic group on the alpha chain.

The protein localises to the cell membrane. It carries out the reaction a 1,2-diacyl-sn-glycero-3-phospho-L-serine + H(+) = a 1,2-diacyl-sn-glycero-3-phosphoethanolamine + CO2. It functions in the pathway phospholipid metabolism; phosphatidylethanolamine biosynthesis; phosphatidylethanolamine from CDP-diacylglycerol: step 2/2. Catalyzes the formation of phosphatidylethanolamine (PtdEtn) from phosphatidylserine (PtdSer). This chain is Phosphatidylserine decarboxylase proenzyme, found in Paraburkholderia xenovorans (strain LB400).